Reading from the N-terminus, the 359-residue chain is Phospho-N-acetylmuramoyl-pentapeptide-transferase (359 aa).

10 helical membrane-spanning segments follow: residues 3–23, 55–75, 80–100, 117–137, 156–176, 187–207, 231–251, 255–275, 280–300, and 334–354; these read LILI…PALI, VAIL…GMAM, PSAS…VGFI, TAKT…ALQF, IATV…VVSA, LDGL…LITF, LALV…WNAA, IFMG…ISVT, ILAV…VVQI, and FWLL…GEWL.

The protein belongs to the glycosyltransferase 4 family. MraY subfamily. Requires Mg(2+) as cofactor.

It is found in the cell membrane. The enzyme catalyses UDP-N-acetyl-alpha-D-muramoyl-L-alanyl-gamma-D-glutamyl-meso-2,6-diaminopimeloyl-D-alanyl-D-alanine + di-trans,octa-cis-undecaprenyl phosphate = di-trans,octa-cis-undecaprenyl diphospho-N-acetyl-alpha-D-muramoyl-L-alanyl-D-glutamyl-meso-2,6-diaminopimeloyl-D-alanyl-D-alanine + UMP. Its pathway is cell wall biogenesis; peptidoglycan biosynthesis. In terms of biological role, catalyzes the initial step of the lipid cycle reactions in the biosynthesis of the cell wall peptidoglycan: transfers peptidoglycan precursor phospho-MurNAc-pentapeptide from UDP-MurNAc-pentapeptide onto the lipid carrier undecaprenyl phosphate, yielding undecaprenyl-pyrophosphoryl-MurNAc-pentapeptide, known as lipid I. The polypeptide is Phospho-N-acetylmuramoyl-pentapeptide-transferase (Mycolicibacterium smegmatis (strain ATCC 700084 / mc(2)155) (Mycobacterium smegmatis)).